A 458-amino-acid polypeptide reads, in one-letter code: MSGRIVQIIGAVIDVEFPRDAVPKVYDALKVSDTETILEVQQQLGDGVVRAIAMGTTEGLKRGLDVVNSGSAISVPVGKATLGRIMNVLGEPIDEAGEIGEDERMPIHRKAPSYAEQAASNELLETGIKVIDLVCPFAKGGKVGLFGGAGVGKTVNMMELIRNIATEHSGYSVFAGVGERTREGNDFYHEMQESNVLDKVSLVYGQMNEPPGNRLRVALTGLTIAEKFRDDGRDVLLFVDNIYRYTLAGTEVSALLGRMPSAVGYQPTLAEEMGVLQERITSTKTGSITSVQAVYVPADDLTDPSPATTFSHLDATVVLARSIAELGIYPAIDPLDSTSRQLDPLTVGEEHYNTARGVQGVLQRYKELKDIIAILGMDELSDEDKLTVSRARKIQRFLSQPFFVAEVFTGAPGKYVSLKETIRGFQGILDGEYDDLPEQAFYMVGTIDEAVEKANNMK.

An ATP-binding site is contributed by 147 to 154; that stretch reads GGAGVGKT.

Belongs to the ATPase alpha/beta chains family. In terms of assembly, F-type ATPases have 2 components, CF(1) - the catalytic core - and CF(0) - the membrane proton channel. CF(1) has five subunits: alpha(3), beta(3), gamma(1), delta(1), epsilon(1). CF(0) has three main subunits: a(1), b(2) and c(9-12). The alpha and beta chains form an alternating ring which encloses part of the gamma chain. CF(1) is attached to CF(0) by a central stalk formed by the gamma and epsilon chains, while a peripheral stalk is formed by the delta and b chains.

It localises to the cell inner membrane. It catalyses the reaction ATP + H2O + 4 H(+)(in) = ADP + phosphate + 5 H(+)(out). Produces ATP from ADP in the presence of a proton gradient across the membrane. The catalytic sites are hosted primarily by the beta subunits. The sequence is that of ATP synthase subunit beta from Chromohalobacter salexigens (strain ATCC BAA-138 / DSM 3043 / CIP 106854 / NCIMB 13768 / 1H11).